Reading from the N-terminus, the 132-residue chain is UPF0299 membrane protein YohJ (132 aa).

4 helical membrane passes run 5 to 25 (LNII…LYAG), 26 to 46 (IFIA…MLIL), 63 to 83 (GCYV…VGVM), and 93 to 113 (FGPV…VVSW).

This sequence belongs to the UPF0299 family.

The protein localises to the cell inner membrane. The protein is UPF0299 membrane protein YohJ of Shigella flexneri serotype 5b (strain 8401).